The primary structure comprises 390 residues: Telobox protein 1 (390 aa).

A disordered region spans residues 30 to 57; it reads ENPSKREVAQDVPGFERKPTKVRKPRVK. Basic and acidic residues predominate over residues 32-48; sequence PSKREVAQDVPGFERKP. 2 HTH myb-type domains span residues 50–109 and 135–193; these read KVRK…PEDY and STRK…PERY. Positions 78 to 105 form a DNA-binding region, H-T-H motif; the sequence is WKKILLDERFHFTNRSPNDLKDRFRTIL. The disordered stretch occupies residues 115-143; it reads NAKTHMGRPQKIPHTVGLSKSTRKERKQF. A DNA-binding region (H-T-H motif) is located at residues 162–189; that stretch reads WTRISKDANLGLQNRRSTDLRDRFRNAF. Polar residues-rich tracts occupy residues 244–257 and 322–340; these read SNPNASPQQTTEQP and ISPSTSQNSVQPFPFSIQQ. Disordered regions lie at residues 244-278 and 316-390; these read SNPNASPQQTTEQPASDELLDWPHHNLPSQFFTSQ and QPPS…DNRG. The span at 347 to 360 shows a compositional bias: low complexity; it reads PPLSSNTLNSSTLP.

The protein resides in the nucleus. Functionally, general transcription factor with prominent roles in controlling histone levels and stability. Binds and regulates the activities of many promoters, including those controlling the expression of all four types of canonical histones. Is also involved in the centromeric loading of cnp1 and maintenance of centromere identity. Moreover, regulates the expression of cdc2, a protease capable of histone clipping. In Schizosaccharomyces pombe (strain 972 / ATCC 24843) (Fission yeast), this protein is Telobox protein 1.